A 77-amino-acid chain; its full sequence is Exodeoxyribonuclease 7 small subunit (77 aa).

It belongs to the XseB family. Heterooligomer composed of large and small subunits.

It localises to the cytoplasm. It catalyses the reaction Exonucleolytic cleavage in either 5'- to 3'- or 3'- to 5'-direction to yield nucleoside 5'-phosphates.. Functionally, bidirectionally degrades single-stranded DNA into large acid-insoluble oligonucleotides, which are then degraded further into small acid-soluble oligonucleotides. In Lysinibacillus sphaericus (strain C3-41), this protein is Exodeoxyribonuclease 7 small subunit.